The following is a 423-amino-acid chain: GPI mannosyltransferase 2 (423 aa).

The next 9 membrane-spanning stretches (helical) occupy residues 11 to 31, 106 to 126, 139 to 159, 160 to 180, 197 to 219, 240 to 260, 299 to 319, 351 to 371, and 400 to 420; these read ILSL…IALG, WEAL…VLAL, LAYL…ISAP, YAES…AISL, GLSY…LFAV, LVAP…PQVL, YWTP…TILL, LAAI…VQII, and GVIV…ASFL.

Belongs to the PIGV family.

The protein resides in the endoplasmic reticulum membrane. It functions in the pathway glycolipid biosynthesis; glycosylphosphatidylinositol-anchor biosynthesis. Functionally, mannosyltransferase involved in glycosylphosphatidylinositol-anchor biosynthesis. Transfers the second mannose to the glycosylphosphatidylinositol during GPI precursor assembly. This chain is GPI mannosyltransferase 2 (GPI18), found in Gibberella zeae (strain ATCC MYA-4620 / CBS 123657 / FGSC 9075 / NRRL 31084 / PH-1) (Wheat head blight fungus).